A 237-amino-acid chain; its full sequence is UPF0173 metal-dependent hydrolase BCAN_B0597 (237 aa).

This sequence belongs to the UPF0173 family.

The protein is UPF0173 metal-dependent hydrolase BCAN_B0597 of Brucella canis (strain ATCC 23365 / NCTC 10854 / RM-666).